The primary structure comprises 475 residues: Dihydrolipoyl dehydrogenase (475 aa).

Residues 36–45, K54, and G117 contribute to the FAD site; that span reads ERYSTLGGVC. A disulfide bridge connects residues C45 and C50. Residues 182-186, E205, V238, and 270-273 each bind NAD(+); these read GGGII and AIGR. Residues D313 and A321 each coordinate FAD. The active-site Proton acceptor is the H445.

Belongs to the class-I pyridine nucleotide-disulfide oxidoreductase family. Requires FAD as cofactor.

Its subcellular location is the cytoplasm. It catalyses the reaction N(6)-[(R)-dihydrolipoyl]-L-lysyl-[protein] + NAD(+) = N(6)-[(R)-lipoyl]-L-lysyl-[protein] + NADH + H(+). Functionally, the branched-chain alpha-keto dehydrogenase complex catalyzes the overall conversion of alpha-keto acids to acyl-CoA and CO(2). It contains multiple copies of 3 enzymatic components: branched-chain alpha-keto acid decarboxylase (E1), lipoamide acyltransferase (E2) and lipoamide dehydrogenase (E3). The protein is Dihydrolipoyl dehydrogenase (lpd) of Vibrio parahaemolyticus serotype O3:K6 (strain RIMD 2210633).